A 127-amino-acid polypeptide reads, in one-letter code: MTITMLKSKIHRATVTEANLNYVGSITIDKNLMDKANILEYEKVQIVDIDNGNRFETYVIAGEKHSGVICLNGAAARMVQKGDKIIIMSYCDLTIDEANKFNPTVLFVDNKNNIEKLTNYEKHGEII.

S25 serves as the catalytic Schiff-base intermediate with substrate; via pyruvic acid. S25 is subject to Pyruvic acid (Ser). Residue T57 coordinates substrate. The active-site Proton donor is Y58. 73 to 75 (GAA) provides a ligand contact to substrate.

This sequence belongs to the PanD family. Heterooctamer of four alpha and four beta subunits. Pyruvate is required as a cofactor. In terms of processing, is synthesized initially as an inactive proenzyme, which is activated by self-cleavage at a specific serine bond to produce a beta-subunit with a hydroxyl group at its C-terminus and an alpha-subunit with a pyruvoyl group at its N-terminus.

It is found in the cytoplasm. It catalyses the reaction L-aspartate + H(+) = beta-alanine + CO2. Its pathway is cofactor biosynthesis; (R)-pantothenate biosynthesis; beta-alanine from L-aspartate: step 1/1. In terms of biological role, catalyzes the pyruvoyl-dependent decarboxylation of aspartate to produce beta-alanine. The polypeptide is Aspartate 1-decarboxylase (Clostridium botulinum (strain 657 / Type Ba4)).